A 107-amino-acid chain; its full sequence is Benzene 1,2-dioxygenase system ferredoxin subunit (107 aa).

The Rieske domain maps to threonine 4–valine 99. [2Fe-2S] cluster is bound by residues cysteine 43, histidine 45, cysteine 62, and histidine 65.

This sequence belongs to the bacterial ring-hydroxylating dioxygenase ferredoxin component family. As to quaternary structure, this dioxygenase system consists of four proteins: the two subunits of the hydroxylase component (BnzA and BnzB), a ferredoxin (BnzC) and a ferredoxin reductase (BnzD).

It functions in the pathway aromatic compound metabolism; benzene degradation; catechol from benzene: step 1/2. In terms of biological role, this protein seems to be a 2Fe-2S ferredoxin. This is Benzene 1,2-dioxygenase system ferredoxin subunit (bnzC) from Pseudomonas putida (Arthrobacter siderocapsulatus).